An 811-amino-acid polypeptide reads, in one-letter code: Probable phosphoketolase (811 aa).

It belongs to the XFP family. Requires thiamine diphosphate as cofactor.

The chain is Probable phosphoketolase from Methylococcus capsulatus (strain ATCC 33009 / NCIMB 11132 / Bath).